Reading from the N-terminus, the 385-residue chain is Signal transduction histidine-protein kinase/phosphatase DegS (385 aa).

A coiled-coil region spans residues glutamine 31 to glutamine 141. At serine 76 the chain carries Phosphoserine. The Histidine kinase domain occupies arginine 183–leucine 385. Histidine 189 is modified (phosphohistidine; by autocatalysis).

Post-translationally, autophosphorylated. Phosphorylated in vitro at Ser-76 by the serine/threonine-protein kinase YbdM, which stimulates the phosphate transfer to DegU.

It localises to the cytoplasm. The enzyme catalyses ATP + protein L-histidine = ADP + protein N-phospho-L-histidine.. Its activity is regulated as follows. Regulated via serine phosphorylation of its input domain. Phosphotransfer from DegS to DegU is stimulated by phosphorylation on Ser-76 and by DegQ. Member of the two-component regulatory system DegS/DegU, which plays an important role in the transition growth phase. Involved in the control of expression of different cellular functions, including production of degradative enzymes such as the neutral and alkaline proteases, flagellum formation and biofilm formation. Acts both as a protein kinase that undergoes autophosphorylation and subsequently transfers the phosphate to DegU, and as a protein phosphatase that dephosphorylates phospho-DegU. In Bacillus subtilis (strain 168), this protein is Signal transduction histidine-protein kinase/phosphatase DegS (degS).